We begin with the raw amino-acid sequence, 311 residues long: DNA-directed RNA polymerase subunit alpha (311 aa).

The segment at 1–228 (MQYQIERIDH…ELFQPLATVT (228 aa)) is alpha N-terminal domain (alpha-NTD). The alpha C-terminal domain (alpha-CTD) stretch occupies residues 239–311 (PSPEAQIPLE…ISIPQSRTSV (73 aa)).

It belongs to the RNA polymerase alpha chain family. In cyanobacteria the RNAP catalytic core is composed of 2 alpha, 1 beta, 1 beta', 1 gamma and 1 omega subunit. When a sigma factor is associated with the core the holoenzyme is formed, which can initiate transcription.

The catalysed reaction is RNA(n) + a ribonucleoside 5'-triphosphate = RNA(n+1) + diphosphate. DNA-dependent RNA polymerase catalyzes the transcription of DNA into RNA using the four ribonucleoside triphosphates as substrates. This chain is DNA-directed RNA polymerase subunit alpha, found in Prochlorococcus marinus (strain MIT 9312).